A 222-amino-acid chain; its full sequence is 7-cyano-7-deazaguanine synthase (222 aa).

14 to 24 contacts ATP; the sequence is FSGGQDSTTCL. Zn(2+) is bound by residues cysteine 192, cysteine 201, cysteine 204, and cysteine 207.

It belongs to the QueC family. As to quaternary structure, homodimer. It depends on Zn(2+) as a cofactor.

The catalysed reaction is 7-carboxy-7-deazaguanine + NH4(+) + ATP = 7-cyano-7-deazaguanine + ADP + phosphate + H2O + H(+). The protein operates within purine metabolism; 7-cyano-7-deazaguanine biosynthesis. In terms of biological role, catalyzes the ATP-dependent conversion of 7-carboxy-7-deazaguanine (CDG) to 7-cyano-7-deazaguanine (preQ(0)). The polypeptide is 7-cyano-7-deazaguanine synthase (Clostridium acetobutylicum (strain ATCC 824 / DSM 792 / JCM 1419 / IAM 19013 / LMG 5710 / NBRC 13948 / NRRL B-527 / VKM B-1787 / 2291 / W)).